A 598-amino-acid chain; its full sequence is DNA polymerase alpha subunit B (598 aa).

A compositionally biased stretch (polar residues) spans 112–140 (SYTTPSKGSQKRAISTPETPLTKRSVSTR). The interval 112–167 (SYTTPSKGSQKRAISTPETPLTKRSVSTRSPHQLLSPSSFSPSATPSQKYNSRSNR) is disordered. At S126 the chain carries Phosphoserine. A phosphothreonine mark is found at T127 and T130. Phosphoserine is present on residues S141, S147, S152, and S154. Positions 141–158 (SPHQLLSPSSFSPSATPS) are enriched in low complexity.

It belongs to the DNA polymerase alpha subunit B family. As to quaternary structure, component of the alpha DNA polymerase complex (also known as the alpha DNA polymerase-primase complex) consisting of four subunits: the catalytic subunit POLA1, the regulatory subunit POLA2, and primase complex subunits PRIM1 and PRIM2 respectively. Within the complex, POLA1 directly interacts with PRIM2/p58. In terms of processing, phosphorylated in a cell cycle-dependent manner, in G2/M phase.

The protein localises to the nucleus. Accessory subunit of the DNA polymerase alpha complex (also known as the alpha DNA polymerase-primase complex) which plays an essential role in the initiation of DNA synthesis. During the S phase of the cell cycle, the DNA polymerase alpha complex (composed of a catalytic subunit POLA1, an accessory subunit POLA2 and two primase subunits, the catalytic subunit PRIM1 and the regulatory subunit PRIM2) is recruited to DNA at the replicative forks via direct interactions with MCM10 and WDHD1. The primase subunit of the polymerase alpha complex initiates DNA synthesis by oligomerising short RNA primers on both leading and lagging strands. These primers are initially extended by the polymerase alpha catalytic subunit and subsequently transferred to polymerase delta and polymerase epsilon for processive synthesis on the lagging and leading strand, respectively. In Homo sapiens (Human), this protein is DNA polymerase alpha subunit B (POLA2).